The sequence spans 205 residues: Glycerol-3-phosphate acyltransferase (205 aa).

The next 4 helical transmembrane spans lie at 4 to 24 (IAPGMILLAYLCGSISSAILV), 80 to 100 (PFWLGLIAIAACLGHIWPIFF), 112 to 132 (FGAIAPIGWDLTGVMAGTWLL), and 138 to 158 (GYSSLGAIVSALVAPFYVWWF).

Belongs to the PlsY family. Probably interacts with PlsX.

The protein localises to the cell inner membrane. The enzyme catalyses an acyl phosphate + sn-glycerol 3-phosphate = a 1-acyl-sn-glycero-3-phosphate + phosphate. Its pathway is lipid metabolism; phospholipid metabolism. In terms of biological role, catalyzes the transfer of an acyl group from acyl-phosphate (acyl-PO(4)) to glycerol-3-phosphate (G3P) to form lysophosphatidic acid (LPA). This enzyme utilizes acyl-phosphate as fatty acyl donor, but not acyl-CoA or acyl-ACP. In Cronobacter sakazakii (strain ATCC BAA-894) (Enterobacter sakazakii), this protein is Glycerol-3-phosphate acyltransferase.